We begin with the raw amino-acid sequence, 226 residues long: ATP synthase subunit a (226 aa).

5 helical membrane passes run 18–38 (LSLN…TYWL), 74–94 (FVSL…PYIF), 100–120 (LTLT…YGWI), 162–182 (LTAN…TGPM), and 187–207 (IILS…SAVA).

Belongs to the ATPase A chain family. As to quaternary structure, F-type ATPases have 2 components, CF(1) - the catalytic core - and CF(0) - the membrane proton channel. CF(1) has five subunits: alpha(3), beta(3), gamma(1), delta(1), epsilon(1). CF(0) has three main subunits: a, b and c.

The protein localises to the mitochondrion inner membrane. Functionally, mitochondrial membrane ATP synthase (F(1)F(0) ATP synthase or Complex V) produces ATP from ADP in the presence of a proton gradient across the membrane which is generated by electron transport complexes of the respiratory chain. F-type ATPases consist of two structural domains, F(1) - containing the extramembraneous catalytic core and F(0) - containing the membrane proton channel, linked together by a central stalk and a peripheral stalk. During catalysis, ATP synthesis in the catalytic domain of F(1) is coupled via a rotary mechanism of the central stalk subunits to proton translocation. Key component of the proton channel; it may play a direct role in the translocation of protons across the membrane. The protein is ATP synthase subunit a of Aedes aegypti (Yellowfever mosquito).